Consider the following 261-residue polypeptide: Endonuclease NucS (261 aa).

This sequence belongs to the NucS endonuclease family.

Its subcellular location is the cytoplasm. Functionally, cleaves both 3' and 5' ssDNA extremities of branched DNA structures. The chain is Endonuclease NucS from Aeropyrum pernix (strain ATCC 700893 / DSM 11879 / JCM 9820 / NBRC 100138 / K1).